We begin with the raw amino-acid sequence, 883 residues long: DNA mismatch repair protein MutS (883 aa).

633–640 (GPNMGGKS) provides a ligand contact to ATP.

This sequence belongs to the DNA mismatch repair MutS family.

Functionally, this protein is involved in the repair of mismatches in DNA. It is possible that it carries out the mismatch recognition step. This protein has a weak ATPase activity. The sequence is that of DNA mismatch repair protein MutS from Bordetella parapertussis (strain 12822 / ATCC BAA-587 / NCTC 13253).